Reading from the N-terminus, the 92-residue chain is Small ribosomal subunit protein uS19c (92 aa).

It belongs to the universal ribosomal protein uS19 family.

Its subcellular location is the plastid. The protein localises to the chloroplast. Protein S19 forms a complex with S13 that binds strongly to the 16S ribosomal RNA. This chain is Small ribosomal subunit protein uS19c, found in Nicotiana sylvestris (Wood tobacco).